The chain runs to 228 residues: Transmembrane protein 186 (228 aa).

The Mitochondrial matrix segment spans residues 1 to 93 (MDMMMMSTRL…RGLRALSRLK (93 aa)). Residues 94-112 (LLQTGITVVLLPTVYYLHL) traverse the membrane as a helical segment. At 113–118 (QGQASV) the chain is on the mitochondrial intermembrane side. The helical transmembrane segment at 119–141 (LVLNRSIGIALFAGVMLYSISHF) threads the bilayer. At 142–228 (VRRVVGMMYL…AFGKVFGSLS (87 aa)) the chain is on the mitochondrial matrix side.

It belongs to the TMEM186 family.

Its subcellular location is the mitochondrion inner membrane. May be required for efficient assembly of the mitochondrial complex I. The protein is Transmembrane protein 186 of Danio rerio (Zebrafish).